A 161-amino-acid polypeptide reads, in one-letter code: Nucleotide-binding protein PputW619_0959 (161 aa).

This sequence belongs to the YajQ family.

In terms of biological role, nucleotide-binding protein. The protein is Nucleotide-binding protein PputW619_0959 of Pseudomonas putida (strain W619).